A 396-amino-acid chain; its full sequence is Probable sugar efflux transporter (396 aa).

12 helical membrane-spanning segments follow: residues 15–35 (VLIM…PVAM), 51–71 (GLMM…AMLA), 84–104 (LFII…FWIL), 109–129 (MCIA…VMRI), 137–157 (QALG…LPIG), 168–188 (VTFG…IRLL), 209–229 (PLLL…FTAY), 245–265 (NFAT…SLLF), 276–296 (FIVV…FSTE), 297–317 (TIIA…CIGL), 333–353 (VATA…ALFG), and 365–385 (IGYT…TTHL).

It belongs to the major facilitator superfamily. SotB (TC 2.A.1.2) family.

It is found in the cell inner membrane. Functionally, involved in the efflux of sugars. The physiological role may be the reduction of the intracellular concentration of toxic sugars or sugar metabolites. In Haemophilus influenzae (strain PittGG), this protein is Probable sugar efflux transporter.